The chain runs to 121 residues: Basic phospholipase A2 homolog piratoxin-1 (121 aa).

7 disulfides stabilise this stretch: Cys-26-Cys-115, Cys-28-Cys-44, Cys-43-Cys-95, Cys-49-Cys-121, Cys-50-Cys-88, Cys-57-Cys-81, and Cys-75-Cys-86. Positions 105-117 are important for membrane-damaging activities in eukaryotes and bacteria; heparin-binding; the sequence is KLYRYHLKPFCKK.

It belongs to the phospholipase A2 family. Group II subfamily. K49 sub-subfamily. As to quaternary structure, homodimer; non-covalently linked. In terms of tissue distribution, expressed by the venom gland.

It localises to the secreted. Rosmarinic acid inhibits the myotoxic activity. Bromophenacyl bromide (BPB) inhibits the myotoxic activity through a covalent binding. Caffeic acid and aristolochic acid, two plant compounds used in folk medicine used to treat envenomation, inhibit the myotoxic activity. Its function is as follows. Snake venom phospholipase A2 (PLA2) homolog that lacks enzymatic activity. Is myotoxic and displays edema-inducing activities. Induces neuromuscular blockage. A model of myotoxic mechanism has been proposed: an apo Lys49-PLA2 is activated by the entrance of a hydrophobic molecule (e.g. fatty acid) at the hydrophobic channel of the protein leading to a reorientation of a monomer. This reorientation causes a transition between 'inactive' to 'active' states, causing alignment of C-terminal and membrane-docking sites (MDoS) side-by-side and putting the membrane-disruption sites (MDiS) in the same plane, exposed to solvent and in a symmetric position for both monomers. The MDoS region stabilizes the toxin on membrane by the interaction of charged residues with phospholipid head groups. Subsequently, the MDiS region destabilizes the membrane with penetration of hydrophobic residues. This insertion causes a disorganization of the membrane, allowing an uncontrolled influx of ions (i.e. calcium and sodium), and eventually triggering irreversible intracellular alterations and cell death. The chain is Basic phospholipase A2 homolog piratoxin-1 from Bothrops pirajai (Piraja's lancehead).